A 165-amino-acid polypeptide reads, in one-letter code: Ecotin-like protein 4 (165 aa).

The protein belongs to the protease inhibitor I11 (ecotin) family.

This Trypanosoma brucei brucei (strain 927/4 GUTat10.1) protein is Ecotin-like protein 4.